Consider the following 484-residue polypeptide: Replication factor C large subunit (484 aa).

46–53 (GPPGSGKT) is a binding site for ATP. Basic and acidic residues-rich tracts occupy residues 419-432 (VKTE…KTKE), 442-451 (RISEPPEPLK), and 459-478 (KSVE…KKQA). The segment at 419-484 (VKTETPKKKE…KKQATLDSFF (66 aa)) is disordered.

This sequence belongs to the activator 1 small subunits family. RfcL subfamily. Heteromultimer composed of small subunits (RfcS) and large subunits (RfcL).

Part of the RFC clamp loader complex which loads the PCNA sliding clamp onto DNA. This is Replication factor C large subunit from Methanococcus maripaludis (strain C5 / ATCC BAA-1333).